The sequence spans 395 residues: ATP phosphoribosyltransferase regulatory subunit (395 aa).

The protein belongs to the class-II aminoacyl-tRNA synthetase family. HisZ subfamily. Heteromultimer composed of HisG and HisZ subunits.

The protein localises to the cytoplasm. The protein operates within amino-acid biosynthesis; L-histidine biosynthesis; L-histidine from 5-phospho-alpha-D-ribose 1-diphosphate: step 1/9. Functionally, required for the first step of histidine biosynthesis. May allow the feedback regulation of ATP phosphoribosyltransferase activity by histidine. The chain is ATP phosphoribosyltransferase regulatory subunit from Thioalkalivibrio sulfidiphilus (strain HL-EbGR7).